Here is an 85-residue protein sequence, read N- to C-terminus: Probable oxaloacetate decarboxylase gamma chain (85 aa).

A helical transmembrane segment spans residues 11–33 (AATLMVTGMAVVFIFLTILVYLV).

This sequence belongs to the OadG family. In terms of assembly, heterotrimer of an alpha, a beta and a gamma subunit. The cofactor is Na(+).

It localises to the cell membrane. The catalysed reaction is oxaloacetate + 2 Na(+)(in) + H(+) = pyruvate + 2 Na(+)(out) + CO2. Functionally, catalyzes the decarboxylation of oxaloacetate coupled to Na(+) translocation. The sequence is that of Probable oxaloacetate decarboxylase gamma chain from Vibrio parahaemolyticus serotype O3:K6 (strain RIMD 2210633).